A 597-amino-acid chain; its full sequence is Elongation factor 4 (597 aa).

The region spanning 2-184 is the tr-type G domain; that stretch reads QHIRNFSIIA…AVISRIPPPK (183 aa). GTP contacts are provided by residues 14–19 and 131–134; these read DHGKST and NKID.

It belongs to the TRAFAC class translation factor GTPase superfamily. Classic translation factor GTPase family. LepA subfamily.

It localises to the cell inner membrane. The enzyme catalyses GTP + H2O = GDP + phosphate + H(+). In terms of biological role, required for accurate and efficient protein synthesis under certain stress conditions. May act as a fidelity factor of the translation reaction, by catalyzing a one-codon backward translocation of tRNAs on improperly translocated ribosomes. Back-translocation proceeds from a post-translocation (POST) complex to a pre-translocation (PRE) complex, thus giving elongation factor G a second chance to translocate the tRNAs correctly. Binds to ribosomes in a GTP-dependent manner. This Nitrosospira multiformis (strain ATCC 25196 / NCIMB 11849 / C 71) protein is Elongation factor 4.